The following is a 74-amino-acid chain: Small ribosomal subunit protein bS18 (74 aa).

It belongs to the bacterial ribosomal protein bS18 family. As to quaternary structure, part of the 30S ribosomal subunit. Forms a tight heterodimer with protein bS6.

Its function is as follows. Binds as a heterodimer with protein bS6 to the central domain of the 16S rRNA, where it helps stabilize the platform of the 30S subunit. The chain is Small ribosomal subunit protein bS18 from Coprothermobacter proteolyticus (strain ATCC 35245 / DSM 5265 / OCM 4 / BT).